The primary structure comprises 293 residues: Lipoyl synthase (293 aa).

[4Fe-4S] cluster contacts are provided by Cys-47, Cys-52, Cys-58, Cys-73, Cys-77, Cys-80, and Ser-285. Residues 59–274 (WSEGTATFMI…EKIGLELGFR (216 aa)) form the Radical SAM core domain.

Belongs to the radical SAM superfamily. Lipoyl synthase family. [4Fe-4S] cluster serves as cofactor.

Its subcellular location is the cytoplasm. It carries out the reaction [[Fe-S] cluster scaffold protein carrying a second [4Fe-4S](2+) cluster] + N(6)-octanoyl-L-lysyl-[protein] + 2 oxidized [2Fe-2S]-[ferredoxin] + 2 S-adenosyl-L-methionine + 4 H(+) = [[Fe-S] cluster scaffold protein] + N(6)-[(R)-dihydrolipoyl]-L-lysyl-[protein] + 4 Fe(3+) + 2 hydrogen sulfide + 2 5'-deoxyadenosine + 2 L-methionine + 2 reduced [2Fe-2S]-[ferredoxin]. It participates in protein modification; protein lipoylation via endogenous pathway; protein N(6)-(lipoyl)lysine from octanoyl-[acyl-carrier-protein]: step 2/2. Catalyzes the radical-mediated insertion of two sulfur atoms into the C-6 and C-8 positions of the octanoyl moiety bound to the lipoyl domains of lipoate-dependent enzymes, thereby converting the octanoylated domains into lipoylated derivatives. This Christiangramia forsetii (strain DSM 17595 / CGMCC 1.15422 / KT0803) (Gramella forsetii) protein is Lipoyl synthase.